A 384-amino-acid chain; its full sequence is Omega-6 fatty acid desaturase, endoplasmic reticulum (384 aa).

Residues 1 to 23 (MGAGGRMQVSPSPKKSETDTLKR) are disordered. Positions 14-23 (KKSETDTLKR) are enriched in basic and acidic residues. 2 helical membrane passes run 56–76 (LIWD…YFPL) and 84–104 (VAWP…WVIA). Residues 105–109 (HECGH) carry the Histidine box-1 motif. A helical membrane pass occupies residues 117–137 (WLDDTVGLIFHSFLLVPYFSW). The Histidine box-2 motif lies at 141–145 (HRRHH). 3 consecutive transmembrane segments (helical) span residues 180–200 (VMLT…NVSG), 226–246 (IYVS…YAAA), and 253–273 (VCLY…ITYL). The Histidine box-3 motif lies at 316 to 320 (HVAHH).

Belongs to the fatty acid desaturase type 1 family.

The protein resides in the endoplasmic reticulum membrane. It functions in the pathway lipid metabolism; polyunsaturated fatty acid biosynthesis. Its function is as follows. ER (microsomal) omega-6 fatty acid desaturase introduces the second double bond in the biosynthesis of 18:3 fatty acids, important constituents of plant membranes. It is thought to use cytochrome b5 as an electron donor and to act on fatty acids esterified to phosphatidylcholine and, possibly, other phospholipids. The sequence is that of Omega-6 fatty acid desaturase, endoplasmic reticulum from Brassica juncea (Indian mustard).